Consider the following 596-residue polypeptide: Probable ABC transporter ECU01_0200/ECU01_1410 (596 aa).

A run of 3 helical transmembrane segments spans residues Ala26–Ile46, Leu173–Ile193, and Leu289–Ile309. One can recognise an ABC transmembrane type-1 domain in the interval Lys39–Thr318. The region spanning Val361 to Ala593 is the ABC transporter domain. Residues Tyr370 and Gly400–Arg411 contribute to the ATP site.

Belongs to the ABC transporter superfamily. ABCB family. Heavy Metal importer (TC 3.A.1.210) subfamily.

The protein resides in the membrane. The polypeptide is Probable ABC transporter ECU01_0200/ECU01_1410 (Encephalitozoon cuniculi (strain GB-M1) (Microsporidian parasite)).